A 72-amino-acid polypeptide reads, in one-letter code: Conotoxin Gla(2)-TxVI/B (72 aa).

Positions 1–19 are cleaved as a signal peptide; it reads MEKLIILLLVAAVLMSTQA. Residues 20-44 constitute a propeptide that is removed on maturation; sequence LFQEKRTMKKIDFLSKGKADAEKQR. 3 disulfide bridges follow: cysteine 48–cysteine 62, cysteine 55–cysteine 66, and cysteine 61–cysteine 70. Position 56 is a 4-carboxyglutamate (glutamate 56). Residue proline 58 is modified to 4-hydroxyproline. Serine 71 bears the Serine amide mark.

In terms of processing, brominated at one of the Trp residues. As to expression, expressed by the venom duct.

The protein resides in the secreted. The chain is Conotoxin Gla(2)-TxVI/B from Conus textile (Cloth-of-gold cone).